The following is a 542-amino-acid chain: Phosphoacetylglucosamine mutase 2 (542 aa).

The Phosphoserine intermediate role is filled by serine 77. Serine 77 contacts Mg(2+). 2 positions are modified to phosphoserine: serine 77 and serine 82. Positions 292, 294, and 296 each coordinate Mg(2+). Substrate contacts are provided by residues 385 to 387 (EAN), 510 to 514 (RSSGT), and arginine 519.

Belongs to the phosphohexose mutase family. Mg(2+) is required as a cofactor.

Its subcellular location is the cytoplasm. It is found in the nucleus. It carries out the reaction N-acetyl-alpha-D-glucosamine 1-phosphate = N-acetyl-D-glucosamine 6-phosphate. It participates in nucleotide-sugar biosynthesis; UDP-N-acetyl-alpha-D-glucosamine biosynthesis; N-acetyl-alpha-D-glucosamine 1-phosphate from alpha-D-glucosamine 6-phosphate (route I): step 2/2. In terms of biological role, catalyzes the conversion of GlcNAc-6-P into GlcNAc-1-P during the synthesis of uridine diphosphate/UDP-GlcNAc, which is a biosynthetic precursor of chitin and also supplies the amino sugars for N-linked oligosaccharides of glycoproteins. This is Phosphoacetylglucosamine mutase 2 from Schizosaccharomyces pombe (strain 972 / ATCC 24843) (Fission yeast).